The sequence spans 323 residues: Transcription factor MYB56 (323 aa).

Over residues 1-14 the composition is skewed to basic and acidic residues; it reads MNPNLLEKDLRGKE. Residues 1 to 84 form a disordered region; it reads MNPNLLEKDL…EKSLRMRGKS (84 aa). Residues 27 to 60 are compositionally biased toward polar residues; that stretch reads NFRSLPNSHTAACKTSLNNPSISRNHPHNKSASV. Residues 66–78 are compositionally biased toward basic and acidic residues; the sequence is EHGNERGENEKSL. HTH myb-type domains are found at residues 88-139 and 140-194; these read TKVC…FNQL and DPRI…ARRT. 2 consecutive DNA-binding regions (H-T-H motif) follow at residues 116-138 and 167-190; these read WNLISNHLLGRSGKSCRLRWFNQ and WALISRLFPGRTDNAVKNHWHVIM. A disordered region spans residues 192–217; sequence RRTRESQRQRQQPPPTLSRDAEMTVS.

Forms homodimer. Interacts with the dephosphorylated active form of BES1 in the nucleus of quiescent center (QC) cells. Interacts with BPM1, BPM2, BPM3, BPM4, BPM5 and BPM6 at the promoter of FLOWERING LOCUS T (FT). As to expression, mostly expressed in flowers (at protein level) and siliques, and, to a lower extent, in roots, stems and leaves. Expressed in embryos (e.g. heart and torpedo stages) and cotyledons, and, at low levels, in roots and inflorescence. Accumulates specifically in root apical meristem quiescent center (QC) and vascular initial cells.

It localises to the nucleus. The protein resides in the cytoplasm. It is found in the cytosol. In terms of biological role, acts as a cell-specific local repressor of quiescent center (QC) self-renewal by cell divisions in the primary root. Counteracts brassinosteroid (BR)-mediated cell division in the QC cells. Regulates maternally seed size, especially before the heart stage, promoting both endothelial cells expansion and cell number in the outer integument layer of the seed coat. Modulates the expression of genes involved in cell wall metabolism such as cell division and expansion. Negative regulator of flowering via the repression of FT transcription. The polypeptide is Transcription factor MYB56 (Arabidopsis thaliana (Mouse-ear cress)).